The chain runs to 502 residues: Probable cytosol aminopeptidase (502 aa).

Mn(2+) contacts are provided by K269 and D274. K281 is a catalytic residue. Mn(2+)-binding residues include D292, D351, and E353. R355 is an active-site residue.

Belongs to the peptidase M17 family. Requires Mn(2+) as cofactor.

Its subcellular location is the cytoplasm. The catalysed reaction is Release of an N-terminal amino acid, Xaa-|-Yaa-, in which Xaa is preferably Leu, but may be other amino acids including Pro although not Arg or Lys, and Yaa may be Pro. Amino acid amides and methyl esters are also readily hydrolyzed, but rates on arylamides are exceedingly low.. The enzyme catalyses Release of an N-terminal amino acid, preferentially leucine, but not glutamic or aspartic acids.. Functionally, presumably involved in the processing and regular turnover of intracellular proteins. Catalyzes the removal of unsubstituted N-terminal amino acids from various peptides. The protein is Probable cytosol aminopeptidase of Aliivibrio fischeri (strain MJ11) (Vibrio fischeri).